We begin with the raw amino-acid sequence, 150 residues long: Phosphoribosyl-AMP cyclohydrolase (150 aa).

Residue D92 coordinates Mg(2+). Zn(2+) is bound at residue C93. The Mg(2+) site is built by D94 and D96. Positions 111 and 118 each coordinate Zn(2+).

This sequence belongs to the PRA-CH family. In terms of assembly, homodimer. Requires Mg(2+) as cofactor. Zn(2+) serves as cofactor.

The protein resides in the cytoplasm. It carries out the reaction 1-(5-phospho-beta-D-ribosyl)-5'-AMP + H2O = 1-(5-phospho-beta-D-ribosyl)-5-[(5-phospho-beta-D-ribosylamino)methylideneamino]imidazole-4-carboxamide. The protein operates within amino-acid biosynthesis; L-histidine biosynthesis; L-histidine from 5-phospho-alpha-D-ribose 1-diphosphate: step 3/9. Functionally, catalyzes the hydrolysis of the adenine ring of phosphoribosyl-AMP. The polypeptide is Phosphoribosyl-AMP cyclohydrolase (Agrobacterium fabrum (strain C58 / ATCC 33970) (Agrobacterium tumefaciens (strain C58))).